The chain runs to 306 residues: CRISPR-associated endonuclease Cas1 (306 aa).

Residues Glu143, His210, and Asp223 each coordinate Mn(2+).

The protein belongs to the CRISPR-associated endonuclease Cas1 family. As to quaternary structure, homodimer, forms a heterotetramer with a Cas2 homodimer. Mg(2+) is required as a cofactor. The cofactor is Mn(2+).

Its function is as follows. CRISPR (clustered regularly interspaced short palindromic repeat), is an adaptive immune system that provides protection against mobile genetic elements (viruses, transposable elements and conjugative plasmids). CRISPR clusters contain spacers, sequences complementary to antecedent mobile elements, and target invading nucleic acids. CRISPR clusters are transcribed and processed into CRISPR RNA (crRNA). Acts as a dsDNA endonuclease. Involved in the integration of spacer DNA into the CRISPR cassette. This is CRISPR-associated endonuclease Cas1 from Geobacter sulfurreducens (strain ATCC 51573 / DSM 12127 / PCA).